The sequence spans 414 residues: MSERVYATYWMETGGDPARTAEVIAGEQSSGTFVALATETAELKERSGARVERLDILDTADIPSLPGGMASDRYTRAILELSWPVENFGPSLPNLMSTIAGNLFELHQVSGLRLIDLKLPPSFTNAFAGPAFGIAGTRKLAGVAQGPIIGTIIKPSIGLTPEETAQQVRELIAGDIDFIKDDELQADGARCPFEARVKAVMRVVNDAADRRGRKVMVAFNITGDLDEMRRRHDLVLAEGGTCVMVCLNSIGLVGVREIRRHTQLPIHGHRAGWGYLYRCPSLGWDYAPWQQLWRLAGVDHLHVNGLDNKFSEANASVIAAARAVLSPLNHAAPMGAMPVFSSGQTGRQAAETYAAIGCADLIHTAGGGIFGHPAGVPAGVEALRAAWRAAMAGASLEDEATRSPALRSALGFWR.

Residues Lys-180, Asp-182, and Glu-183 each coordinate Mg(2+). Lys-180 carries the post-translational modification N6-carboxylysine.

The protein belongs to the RuBisCO large chain family. It depends on Mg(2+) as a cofactor.

The enzyme catalyses 3-oxoisoapionate 4-phosphate + H2O = (2R)-3-phosphoglycerate + glycolate + H(+). It functions in the pathway carbohydrate metabolism. Functionally, involved in catabolism of D-apiose. Catalyzes the conversion of 3-oxo-isoapionate 4-phosphate to 3-phosphoglycerate and glycolate. The sequence is that of 3-oxo-isoapionate-4-phosphate transcarboxylase/hydrolase from Xanthobacter autotrophicus (strain ATCC BAA-1158 / Py2).